The following is a 1307-amino-acid chain: Rab3 GTPase-activating protein regulatory subunit (1307 aa).

The protein belongs to the Rab3-GAP regulatory subunit family. In terms of assembly, the Rab3 GTPase-activating complex is a heterodimer composed of rbg-1 and rbg-2.

Its subcellular location is the cytoplasm. In terms of biological role, probable regulatory subunit of a GTPase activating protein that has specificity for Rab3 subfamily. Rab3 proteins are involved in regulated exocytosis of neurotransmitters and hormones. Rab3 GTPase-activating complex specifically converts active Rab3-GTP to the inactive form Rab3-GDP. This chain is Rab3 GTPase-activating protein regulatory subunit (rbg-2), found in Caenorhabditis elegans.